The sequence spans 365 residues: Terpene cyclase 4 (365 aa).

Residues 1–11 show a composition bias toward pro residues; the sequence is MVPSLITPPPS. Residues 1–20 are disordered; it reads MVPSLITPPPSRSGEATPQK. D118, N260, and S264 together coordinate Mg(2+). A D(D/E)XX(D/E) motif motif is present at residues 118–122; the sequence is DDPFD. An NSE motif motif is present at residues 260–268; sequence NDLCSYRKD. A WxxxxxRY motif motif is present at residues 341–348; it reads WSLYTFRY. Positions 347 and 348 each coordinate (2E,6E)-farnesyl diphosphate.

It belongs to the terpene synthase family. In terms of assembly, homodimer. Mg(2+) is required as a cofactor.

The enzyme catalyses (2E,6E)-farnesyl diphosphate + H2O = koraiol + diphosphate. Its pathway is sesquiterpene biosynthesis. Terpene cyclase that catalyzes the cyclization of farnesyl diphosphate (FPP) to the sesquiterpene koraiol. The chain is Terpene cyclase 4 from Gibberella fujikuroi (strain CBS 195.34 / IMI 58289 / NRRL A-6831) (Bakanae and foot rot disease fungus).